The following is a 228-amino-acid chain: Uracil-DNA glycosylase (228 aa).

Asp65 (proton acceptor) is an active-site residue.

The protein belongs to the uracil-DNA glycosylase (UDG) superfamily. UNG family.

It is found in the cytoplasm. The enzyme catalyses Hydrolyzes single-stranded DNA or mismatched double-stranded DNA and polynucleotides, releasing free uracil.. In terms of biological role, excises uracil residues from the DNA which can arise as a result of misincorporation of dUMP residues by DNA polymerase or due to deamination of cytosine. The chain is Uracil-DNA glycosylase from Lacticaseibacillus paracasei (strain ATCC 334 / BCRC 17002 / CCUG 31169 / CIP 107868 / KCTC 3260 / NRRL B-441) (Lactobacillus paracasei).